The following is a 135-amino-acid chain: Small ribosomal subunit protein uS9 (135 aa).

The segment covering V108 to K118 has biased composition (basic and acidic residues). The interval V108–R135 is disordered. Positions P119–R135 are enriched in basic residues.

The protein belongs to the universal ribosomal protein uS9 family.

This Pyrococcus abyssi (strain GE5 / Orsay) protein is Small ribosomal subunit protein uS9 (rps9).